Consider the following 55-residue polypeptide: ATP synthase F(0) complex subunit 8 (55 aa).

A helical transmembrane segment spans residues 4–24 (LNPAPWFAILVFSWLVFLTVI). Residues 36 to 55 (EPTSQSTEKTKPEPWNWPWH) form a disordered region.

This sequence belongs to the ATPase protein 8 family. As to quaternary structure, component of the ATP synthase complex composed at least of ATP5F1A/subunit alpha, ATP5F1B/subunit beta, ATP5MC1/subunit c (homooctomer), MT-ATP6/subunit a, MT-ATP8/subunit 8, ATP5ME/subunit e, ATP5MF/subunit f, ATP5MG/subunit g, ATP5MK/subunit k, ATP5MJ/subunit j, ATP5F1C/subunit gamma, ATP5F1D/subunit delta, ATP5F1E/subunit epsilon, ATP5PF/subunit F6, ATP5PB/subunit b, ATP5PD/subunit d, ATP5PO/subunit OSCP. ATP synthase complex consists of a soluble F(1) head domain (subunits alpha(3) and beta(3)) - the catalytic core - and a membrane F(0) domain - the membrane proton channel (subunits c, a, 8, e, f, g, k and j). These two domains are linked by a central stalk (subunits gamma, delta, and epsilon) rotating inside the F1 region and a stationary peripheral stalk (subunits F6, b, d, and OSCP).

Its subcellular location is the mitochondrion membrane. Its function is as follows. Subunit 8, of the mitochondrial membrane ATP synthase complex (F(1)F(0) ATP synthase or Complex V) that produces ATP from ADP in the presence of a proton gradient across the membrane which is generated by electron transport complexes of the respiratory chain. ATP synthase complex consist of a soluble F(1) head domain - the catalytic core - and a membrane F(1) domain - the membrane proton channel. These two domains are linked by a central stalk rotating inside the F(1) region and a stationary peripheral stalk. During catalysis, ATP synthesis in the catalytic domain of F(1) is coupled via a rotary mechanism of the central stalk subunits to proton translocation. In vivo, can only synthesize ATP although its ATP hydrolase activity can be activated artificially in vitro. Part of the complex F(0) domain. In Salvelinus alpinus (Arctic char), this protein is ATP synthase F(0) complex subunit 8.